Here is a 362-residue protein sequence, read N- to C-terminus: Protein-arginine kinase (362 aa).

The region spanning 24-255 (IVLSSRIRLA…QQLIAQERMA (232 aa)) is the Phosphagen kinase C-terminal domain. ATP is bound by residues 27–31 (SSRIR), H92, R126, 177–181 (RASVM), and 208–213 (RGTYGE). Residues 338 to 343 (RDVRRA) carry the RDXXRA motif of the pArg binding pocket involved in allosteric regulation motif.

It belongs to the ATP:guanido phosphotransferase family.

It carries out the reaction L-arginyl-[protein] + ATP = N(omega)-phospho-L-arginyl-[protein] + ADP + H(+). With respect to regulation, appears to be allosterically activated by the binding of pArg-containing polypeptides to the pArg-binding pocket localized in the C-terminal domain of McsB. Its function is as follows. Catalyzes the specific phosphorylation of arginine residues in a large number of proteins. Is part of the bacterial stress response system. Protein arginine phosphorylation has a physiologically important role and is involved in the regulation of many critical cellular processes, such as protein homeostasis, motility, competence, and stringent and stress responses, by regulating gene expression and protein activity. This Geobacillus sp. (strain WCH70) protein is Protein-arginine kinase.